The following is a 232-amino-acid chain: Orotidine 5'-phosphate decarboxylase (232 aa).

Substrate is bound by residues Asp-13, Lys-35, 62–71 (DLKFHDIPNT), Thr-122, Arg-182, Gln-191, Gly-211, and Arg-212. Catalysis depends on Lys-64, which acts as the Proton donor.

It belongs to the OMP decarboxylase family. Type 1 subfamily. In terms of assembly, homodimer.

The catalysed reaction is orotidine 5'-phosphate + H(+) = UMP + CO2. It participates in pyrimidine metabolism; UMP biosynthesis via de novo pathway; UMP from orotate: step 2/2. Catalyzes the decarboxylation of orotidine 5'-monophosphate (OMP) to uridine 5'-monophosphate (UMP). This chain is Orotidine 5'-phosphate decarboxylase, found in Pseudomonas fluorescens (strain Pf0-1).